A 219-amino-acid chain; its full sequence is Urease accessory protein UreG (219 aa).

Residues 1–20 (MSALHSIPHRSKKLPPLRVG) are disordered. A GTP-binding site is contributed by 23–30 (GPVGSGKT).

The protein belongs to the SIMIBI class G3E GTPase family. UreG subfamily. As to quaternary structure, homodimer. UreD, UreF and UreG form a complex that acts as a GTP-hydrolysis-dependent molecular chaperone, activating the urease apoprotein by helping to assemble the nickel containing metallocenter of UreC. The UreE protein probably delivers the nickel.

It localises to the cytoplasm. Its function is as follows. Facilitates the functional incorporation of the urease nickel metallocenter. This process requires GTP hydrolysis, probably effectuated by UreG. The chain is Urease accessory protein UreG from Methylibium petroleiphilum (strain ATCC BAA-1232 / LMG 22953 / PM1).